The following is a 469-amino-acid chain: Keratin, type I cytoskeletal 16 (469 aa).

Residues 1–20 (MATCSRQFTSSSSMKGSCGI) are disordered. The head stretch occupies residues 1–112 (MATCSRQFTS…GIGDGLLVGS (112 aa)). A coil 1A region spans residues 113–148 (EKVTMQNLNDRLATYLDKVRALEEANRDLEVKIRDW). Residues 113–424 (EKVTMQNLND…RLLDGENIHS (312 aa)) enclose the IF rod domain. Residues 149-166 (YQRQRPTEIKDYSPYFKT) form a linker 1 region. The coil 1B stretch occupies residues 167–258 (IEDLKSKIII…KNHEEEMLAL (92 aa)). Residues 259–281 (RGQTGGDVNVEMDAAPGVDLSRI) are linker 12. The coil 2 stretch occupies residues 282–420 (LNEMRDQYEQ…ATYRRLLDGE (139 aa)). The tract at residues 421 to 469 (NIHSSSQHSSGQSYSSREVFSSSSRQPRSILKEQGSTSFSQSQSQSSRD) is tail. A disordered region spans residues 422 to 469 (IHSSSQHSSGQSYSSREVFSSSSRQPRSILKEQGSTSFSQSQSQSSRD). Composition is skewed to low complexity over residues 423–444 (HSSSQHSSGQSYSSREVFSSSS) and 454–469 (QGSTSFSQSQSQSSRD).

This sequence belongs to the intermediate filament family. Heterodimer of a type I and a type II keratin. KRT16 associates with KRT6 isomers (KRT6A or KRT6B). Interacts with TCHP. Interacts with TRADD. As to expression, expressed in the epithelia of the tongue, upper and lower palate, footpad, proximal nail fold and nail bed, penile spine, sweat gland ducts, and back epidermis (at protein level). Expressed in upper suprabasal layers of the corneal epithelium (at protein level). Expressed in internal stratified epithelia in the esophagus and vagina (at protein level). Expressed in transitional stratified squamous epithelia in the forestomach, anal canal, and nasal cavity (at protein level). Expressed in transitional epithelia of the ureter, bladder and urethra (at protein level). In mature hair follicles, expressed in the companion layer of the outer root sheath during anagen and in the club hair sheath during catagen and telogen (at protein level).

In terms of biological role, epidermis-specific type I keratin that plays a key role in skin. Acts as a regulator of innate immunity in response to skin barrier breach: required for some inflammatory checkpoint for the skin barrier maintenance. This Mus musculus (Mouse) protein is Keratin, type I cytoskeletal 16 (Krt16).